The chain runs to 122 residues: Large ribosomal subunit protein uL14 (122 aa).

It belongs to the universal ribosomal protein uL14 family. Part of the 50S ribosomal subunit. Forms a cluster with proteins L3 and L19. In the 70S ribosome, L14 and L19 interact and together make contacts with the 16S rRNA in bridges B5 and B8.

Its function is as follows. Binds to 23S rRNA. Forms part of two intersubunit bridges in the 70S ribosome. This chain is Large ribosomal subunit protein uL14, found in Bifidobacterium longum (strain DJO10A).